Here is a 1124-residue protein sequence, read N- to C-terminus: Sodium/hydrogen exchanger 11 (1124 aa).

11 helical membrane passes run Leu-25–Leu-45, Cys-52–Tyr-72, Phe-90–Phe-110, Val-120–Ile-140, Ile-179–Phe-199, Asp-224–Ala-244, Ile-254–Ser-274, Ile-305–Gly-325, Ile-335–Leu-355, Gly-372–Val-392, and Met-405–Met-425. N-linked (GlcNAc...) asparagine glycosylation is found at Asn-447 and Asn-473. 4 consecutive transmembrane segments (helical) span residues Thr-612–Ala-632, Ile-641–Ile-661, Leu-674–Leu-694, and Val-706–Ile-726. The tract at residues Ser-642 to Ile-723 is ion transport-like. Ile-867–Leu-999 contributes to the a nucleoside 3',5'-cyclic phosphate binding site.

Belongs to the monovalent cation:proton antiporter 1 (CPA1) transporter (TC 2.A.36) family.

The protein localises to the membrane. Its function is as follows. Involved in pH regulation. In Homo sapiens (Human), this protein is Sodium/hydrogen exchanger 11 (SLC9C2).